The chain runs to 87 residues: Small ribosomal subunit protein bS20 (87 aa).

A disordered region spans residues 1–22 (MAHHKSALKRIKQNKRKQFRNK).

This sequence belongs to the bacterial ribosomal protein bS20 family.

Binds directly to 16S ribosomal RNA. In Geobacter metallireducens (strain ATCC 53774 / DSM 7210 / GS-15), this protein is Small ribosomal subunit protein bS20.